Consider the following 585-residue polypeptide: Regulatory protein BlaR1 (585 aa).

Topologically, residues Met-1–Leu-4 are extracellular. A helical transmembrane segment spans residues Leu-5–Phe-22. Over Arg-23–Asn-31 the chain is Cytoplasmic. Residues Tyr-32–Ile-48 form a helical membrane-spanning segment. At Pro-49 to Asn-104 the chain is on the extracellular side. The chain crosses the membrane as a helical span at residues Ile-105–Leu-122. The Cytoplasmic portion of the chain corresponds to Lys-123–Leu-311. The helical transmembrane segment at Ile-312–Phe-328 threads the bilayer. Residues Leu-329–Gln-585 are Extracellular-facing. The beta-lactam antibiotic sensor domain stretch occupies residues Gly-331–Gln-585. Residue Ser-389 is the Acyl-ester intermediate of the active site. Lys-392 bears the N6-carboxylysine mark.

This sequence belongs to the peptidase M56 family. Carboxylation occurs on two lysine residues. Carboxylation at 'Lys-392' activates the active site serine residue for acylation. On acylation, the lysine side chain experiences a spontaneous decarboxylation that entraps the sensor in its activated state.

It localises to the cell membrane. In terms of biological role, integral membrane protein involved in sensing of the presence of beta-lactam antibiotics and transduction of the information to the cytoplasm. Mechanistically, activation of the signal transducer involves acylation of a serine in the C-terminal sensor domain upon binding of the beta-lactam antibiotic. In turn, a conformational change occurs and the signal is transmitted from the cell surface to the cytoplasm. There, the zinc protease domain is activated and initiates autoproteolysis as well as cleavage of the transcriptional repressor BlaI leading to derepression of antibiotic resistance genes. The protein is Regulatory protein BlaR1 (blaR1) of Staphylococcus aureus.